The chain runs to 357 residues: 4-hydroxyphenylpyruvate dioxygenase (357 aa).

VOC domains follow at residues 17-137 and 165-316; these read GFEF…LVDR and YIDH…IFTD. Residues histidine 168, histidine 246, and glutamate 325 each coordinate Fe cation.

The protein belongs to the 4HPPD family. Homotetramer. Fe cation is required as a cofactor.

The catalysed reaction is 3-(4-hydroxyphenyl)pyruvate + O2 = homogentisate + CO2. Its pathway is amino-acid degradation; L-phenylalanine degradation; acetoacetate and fumarate from L-phenylalanine: step 3/6. The polypeptide is 4-hydroxyphenylpyruvate dioxygenase (hpd) (Pseudomonas aeruginosa (strain ATCC 15692 / DSM 22644 / CIP 104116 / JCM 14847 / LMG 12228 / 1C / PRS 101 / PAO1)).